Here is a 192-residue protein sequence, read N- to C-terminus: Large ribosomal subunit protein uL5 (192 aa).

The protein belongs to the universal ribosomal protein uL5 family. As to quaternary structure, part of the 50S ribosomal subunit; part of the 5S rRNA/L5/L18/L25 subcomplex. Contacts the 5S rRNA and the P site tRNA. Forms a bridge to the 30S subunit in the 70S ribosome.

This is one of the proteins that bind and probably mediate the attachment of the 5S RNA into the large ribosomal subunit, where it forms part of the central protuberance. In the 70S ribosome it contacts protein S13 of the 30S subunit (bridge B1b), connecting the 2 subunits; this bridge is implicated in subunit movement. Contacts the P site tRNA; the 5S rRNA and some of its associated proteins might help stabilize positioning of ribosome-bound tRNAs. The protein is Large ribosomal subunit protein uL5 of Mesorhizobium japonicum (strain LMG 29417 / CECT 9101 / MAFF 303099) (Mesorhizobium loti (strain MAFF 303099)).